The chain runs to 499 residues: Interleukin-17 receptor B (499 aa).

A signal peptide spans 1 to 17; it reads MLLVLLILAASCRSALP. Residues 18–286 lie on the Extracellular side of the membrane; the sequence is REPTIQCGSE…PDDNRRMLGG (269 aa). Asparagine 67, asparagine 103, asparagine 156, and asparagine 197 each carry an N-linked (GlcNAc...) asparagine glycan. A helical membrane pass occupies residues 287-307; it reads WLPLFLVLLVAVWVLAAGIYL. Over 308–499 the chain is Cytoplasmic; the sequence is TWRQGRSTKT…QACHDSCSPL (192 aa). One can recognise an SEFIR domain in the interval 328 to 474; the sequence is LIKVLVVYPS…LMKDATAFHT (147 aa).

Interacts with DAZAP2. Interacts with TRAF3IP2. In terms of tissue distribution, liver and testis. Expressed at lower level in kidney and lung. Expressed in selected T-cell, B-cell and myeloid cell lines.

Its subcellular location is the cell membrane. The protein localises to the secreted. Receptor for the pro-inflammatory cytokines IL17B and IL17E. May play a role in controlling the growth and/or differentiation of hematopoietic cells. The polypeptide is Interleukin-17 receptor B (Il17rb) (Mus musculus (Mouse)).